Reading from the N-terminus, the 183-residue chain is Translation initiation factor IF-3 (183 aa).

The protein belongs to the IF-3 family. In terms of assembly, monomer.

The protein localises to the cytoplasm. Its function is as follows. IF-3 binds to the 30S ribosomal subunit and shifts the equilibrium between 70S ribosomes and their 50S and 30S subunits in favor of the free subunits, thus enhancing the availability of 30S subunits on which protein synthesis initiation begins. The chain is Translation initiation factor IF-3 from Pseudomonas syringae pv. tomato (strain ATCC BAA-871 / DC3000).